A 257-amino-acid chain; its full sequence is 7-carboxy-7-deazaguanine synthase (257 aa).

Residues 29–31 and arginine 44 contribute to the substrate site; that span reads LQG. One can recognise a Radical SAM core domain in the interval 35 to 253; it reads LAGTPSVFVR…PRLHVALWND (219 aa). [4Fe-4S] cluster contacts are provided by cysteine 48, cysteine 52, and cysteine 55. Serine 57 is a binding site for Mg(2+). Residue threonine 90 participates in substrate binding. Glycine 92 lines the S-adenosyl-L-methionine pocket. Residues 133–153 form a disordered region; the sequence is VSPKLASSTPTAETDPKGDGE.

It belongs to the radical SAM superfamily. 7-carboxy-7-deazaguanine synthase family. Homodimer. It depends on [4Fe-4S] cluster as a cofactor. S-adenosyl-L-methionine serves as cofactor. Requires Mg(2+) as cofactor.

The enzyme catalyses 6-carboxy-5,6,7,8-tetrahydropterin + H(+) = 7-carboxy-7-deazaguanine + NH4(+). It participates in purine metabolism; 7-cyano-7-deazaguanine biosynthesis. In terms of biological role, catalyzes the complex heterocyclic radical-mediated conversion of 6-carboxy-5,6,7,8-tetrahydropterin (CPH4) to 7-carboxy-7-deazaguanine (CDG), a step common to the biosynthetic pathways of all 7-deazapurine-containing compounds. The protein is 7-carboxy-7-deazaguanine synthase of Halobacterium salinarum (strain ATCC 29341 / DSM 671 / R1).